The primary structure comprises 209 residues: ATP synthase subunit b', chloroplastic (209 aa).

The transit peptide at 1 to 62 (MASLLARPQQ…NALMAMPAAA (62 aa)) directs the protein to the chloroplast. Residues 67 to 87 (IFDFNLTLPVMAGEFLLLMVF) form a helical membrane-spanning segment.

Belongs to the ATPase B chain family. As to quaternary structure, F-type ATPases have 2 components, F(1) - the catalytic core - and F(0) - the membrane proton channel. F(1) has five subunits: alpha(3), beta(3), gamma(1), delta(1), epsilon(1). F(0) has four main subunits: a(1), b(1), b'(1) and c(10-14). The alpha and beta chains form an alternating ring which encloses part of the gamma chain. F(1) is attached to F(0) by a central stalk formed by the gamma and epsilon chains, while a peripheral stalk is formed by the delta, b and b' chains.

Its subcellular location is the plastid. It is found in the chloroplast thylakoid membrane. F(1)F(0) ATP synthase produces ATP from ADP in the presence of a proton or sodium gradient. F-type ATPases consist of two structural domains, F(1) containing the extramembraneous catalytic core and F(0) containing the membrane proton channel, linked together by a central stalk and a peripheral stalk. During catalysis, ATP synthesis in the catalytic domain of F(1) is coupled via a rotary mechanism of the central stalk subunits to proton translocation. In terms of biological role, component of the F(0) channel, it forms part of the peripheral stalk, linking F(1) to F(0). The b'-subunit is a diverged and duplicated form of b found in plants and photosynthetic bacteria. The polypeptide is ATP synthase subunit b', chloroplastic (Chlamydomonas reinhardtii (Chlamydomonas smithii)).